Here is a 235-residue protein sequence, read N- to C-terminus: 2-C-methyl-D-erythritol 4-phosphate cytidylyltransferase (235 aa).

It belongs to the IspD/TarI cytidylyltransferase family. IspD subfamily.

The enzyme catalyses 2-C-methyl-D-erythritol 4-phosphate + CTP + H(+) = 4-CDP-2-C-methyl-D-erythritol + diphosphate. It functions in the pathway isoprenoid biosynthesis; isopentenyl diphosphate biosynthesis via DXP pathway; isopentenyl diphosphate from 1-deoxy-D-xylulose 5-phosphate: step 2/6. Catalyzes the formation of 4-diphosphocytidyl-2-C-methyl-D-erythritol from CTP and 2-C-methyl-D-erythritol 4-phosphate (MEP). The chain is 2-C-methyl-D-erythritol 4-phosphate cytidylyltransferase from Pseudomonas fluorescens (strain Pf0-1).